A 175-amino-acid polypeptide reads, in one-letter code: Homeobox expressed in ES cells 1 (175 aa).

A disordered region spans residues 1-44; sequence MSPNLQEGARLVEGKPSSTSFSIESILGLDQKKDDAPSMKPHRP. The segment at residues 108–167 is a DNA-binding region (homeobox); sequence GRRPRTAFTQNQVEVLENVFRVNCYPGIDIREDLARKLNLEEDRIQIWFQNRRAKLKRSH.

Belongs to the ANF homeobox family. As to quaternary structure, interacts with TLE1.

It is found in the nucleus. Functionally, required for the normal development of the forebrain, eyes and other anterior structures such as the olfactory placodes and pituitary gland. Possible transcriptional repressor. Binds to the palindromic PIII sequence, 5'-AGCTTGAGTCTAATTGAATTAACTGTAC-3'. The chain is Homeobox expressed in ES cells 1 (HESX1) from Oryctolagus cuniculus (Rabbit).